We begin with the raw amino-acid sequence, 329 residues long: UDP-3-O-acylglucosamine N-acyltransferase (329 aa).

Histidine 224 serves as the catalytic Proton acceptor.

This sequence belongs to the transferase hexapeptide repeat family. LpxD subfamily. In terms of assembly, homotrimer.

It catalyses the reaction a UDP-3-O-[(3R)-3-hydroxyacyl]-alpha-D-glucosamine + a (3R)-hydroxyacyl-[ACP] = a UDP-2-N,3-O-bis[(3R)-3-hydroxyacyl]-alpha-D-glucosamine + holo-[ACP] + H(+). It functions in the pathway bacterial outer membrane biogenesis; LPS lipid A biosynthesis. In terms of biological role, catalyzes the N-acylation of UDP-3-O-acylglucosamine using 3-hydroxyacyl-ACP as the acyl donor. Is involved in the biosynthesis of lipid A, a phosphorylated glycolipid that anchors the lipopolysaccharide to the outer membrane of the cell. This chain is UDP-3-O-acylglucosamine N-acyltransferase, found in Albidiferax ferrireducens (strain ATCC BAA-621 / DSM 15236 / T118) (Rhodoferax ferrireducens).